We begin with the raw amino-acid sequence, 352 residues long: Transcription factor MYB51 (352 aa).

HTH myb-type domains lie at 10–62 and 63–117; these read ELGL…ANYL and RPDI…KKRL. DNA-binding regions (H-T-H motif) lie at residues 38–62 and 90–113; these read WRTL…ANYL and WSAI…NTHI. 2 disordered regions span residues 128-157 and 198-219; these read KGIT…DLDN and GGPL…SVDS. The segment covering 203 to 219 has biased composition (low complexity); that stretch reads STSHTTNTTTTSVSVDS.

Can form complexes with MYC2, MYC3 or MYC4. As to expression, expressed in vegetative parts of the plant, mainly in mature rosette leaves and in trichomes. Detected in roots, but not in mature flowers or siliques.

The protein localises to the nucleus. Functionally, transcription factor positively regulating indolic glucosinolate biosynthetic pathway genes. This Arabidopsis thaliana (Mouse-ear cress) protein is Transcription factor MYB51 (MYB51).